The following is a 348-amino-acid chain: 3-isopropylmalate dehydrogenase (348 aa).

Residue 76-87 (GPKWTDPNNRPE) participates in NAD(+) binding. The substrate site is built by Arg-94, Arg-104, Arg-132, and Asp-217. Mg(2+)-binding residues include Asp-217, Asp-241, and Asp-245. 275–287 (GSAPDIAGKNVAN) contributes to the NAD(+) binding site.

The protein belongs to the isocitrate and isopropylmalate dehydrogenases family. LeuB type 1 subfamily. As to quaternary structure, homodimer. The cofactor is Mg(2+). Mn(2+) is required as a cofactor.

It is found in the cytoplasm. The enzyme catalyses (2R,3S)-3-isopropylmalate + NAD(+) = 4-methyl-2-oxopentanoate + CO2 + NADH. It functions in the pathway amino-acid biosynthesis; L-leucine biosynthesis; L-leucine from 3-methyl-2-oxobutanoate: step 3/4. Functionally, catalyzes the oxidation of 3-carboxy-2-hydroxy-4-methylpentanoate (3-isopropylmalate) to 3-carboxy-4-methyl-2-oxopentanoate. The product decarboxylates to 4-methyl-2 oxopentanoate. The sequence is that of 3-isopropylmalate dehydrogenase from Staphylococcus aureus (strain bovine RF122 / ET3-1).